The following is a 295-amino-acid chain: Histamine N-methyltransferase (295 aa).

Blocked amino end (Ala) is present on Ala-2. Glu-28 serves as a coordination point for substrate. Residues Gly-60, Glu-89, Gln-94, Ser-120, and Ile-143 each coordinate S-adenosyl-L-methionine. Asn-284 lines the substrate pocket.

It belongs to the class I-like SAM-binding methyltransferase superfamily. HNMT family. In terms of assembly, monomer.

The protein resides in the cytoplasm. It carries out the reaction histamine + S-adenosyl-L-methionine = N(tau)-methylhistamine + S-adenosyl-L-homocysteine + H(+). Functionally, inactivates histamine by N-methylation. Plays an important role in degrading histamine and in regulating the airway response to histamine. This is Histamine N-methyltransferase (Hnmt) from Rattus norvegicus (Rat).